The chain runs to 582 residues: Protein NUCLEAR FUSION DEFECTIVE 4 (582 aa).

The tract at residues 1-20 (MRPRIRDVSDKLRPNRASFD) is disordered. The next 8 membrane-spanning stretches (helical) occupy residues 46 to 66 (VLVA…FSAY), 100 to 120 (IALG…MGFV), 132 to 152 (IITL…LSIC), 172 to 192 (LALS…SLAF), 202 to 222 (LYLL…LYPV), 243 to 263 (VFTI…LSSS), 270 to 290 (LNFI…LLVY), and 358 to 378 (LEFW…LVYS). Asparagine 391 carries an N-linked (GlcNAc...) asparagine glycan. A run of 5 helical transmembrane segments spans residues 395 to 412 (LVTI…LSAA), 425 to 445 (TGWF…LAVS), 458 to 478 (LIGL…SDLF), 489 to 509 (ILIT…ASIY), and 536 to 556 (TFVF…SLYI).

The protein resides in the membrane. In terms of biological role, required for karyogamy during female gametophyte development, when the two polar nuclei fuse to form the diploid central cell nucleus. In Arabidopsis thaliana (Mouse-ear cress), this protein is Protein NUCLEAR FUSION DEFECTIVE 4.